A 267-amino-acid chain; its full sequence is Hydroxynaphthalene reductase-like protein Arp2 (267 aa).

Positions 25, 45, 71, and 98 each coordinate NADP(+). Residues S147 and S148 each act as proton donor in the active site. 4 residues coordinate NADP(+): Y162, K166, V195, and T197. The active-site Proton acceptor is Y162. The active-site Lowers pKa of active site Tyr is K166.

Belongs to the short-chain dehydrogenases/reductases (SDR) family.

Hydroxynaphthalene reductase-like protein; part of the Pks2 gene cluster that mediates the formation of infectious structures (appressoria), enabling these fungi to kill insects faster. The product of the Pks2 gene cluster is different from the one of Pks1 and has still not been identified. The polypeptide is Hydroxynaphthalene reductase-like protein Arp2 (Metarhizium majus (strain ARSEF 297)).